Consider the following 241-residue polypeptide: Ribose-5-phosphate isomerase A (241 aa).

Residues 29–32 (TGTT), 84–87 (DGAD), and 97–100 (KGGG) each bind substrate. The active-site Proton acceptor is Glu106. Lys124 lines the substrate pocket.

Belongs to the ribose 5-phosphate isomerase family. In terms of assembly, homodimer.

The enzyme catalyses aldehydo-D-ribose 5-phosphate = D-ribulose 5-phosphate. It functions in the pathway carbohydrate degradation; pentose phosphate pathway; D-ribose 5-phosphate from D-ribulose 5-phosphate (non-oxidative stage): step 1/1. In terms of biological role, catalyzes the reversible conversion of ribose-5-phosphate to ribulose 5-phosphate. This Thermoplasma acidophilum (strain ATCC 25905 / DSM 1728 / JCM 9062 / NBRC 15155 / AMRC-C165) protein is Ribose-5-phosphate isomerase A.